We begin with the raw amino-acid sequence, 319 residues long: NADH-quinone oxidoreductase subunit H 2 (319 aa).

The next 9 membrane-spanning stretches (helical) occupy residues 1–21 (MIGM…LLVL), 77–97 (ILAP…VAIG), 107–127 (VGLL…VLGA), 147–167 (LAYE…AGSF), 179–199 (VWFV…GIAA), 214–234 (LIAG…FLGE), 238–258 (VLLV…GPWL), 262–282 (VWFG…RATL), and 293–313 (FAWK…GIVV).

This sequence belongs to the complex I subunit 1 family. NDH-1 is composed of 14 different subunits. Subunits NuoA, H, J, K, L, M, N constitute the membrane sector of the complex.

It is found in the cell inner membrane. It carries out the reaction a quinone + NADH + 5 H(+)(in) = a quinol + NAD(+) + 4 H(+)(out). Its function is as follows. NDH-1 shuttles electrons from NADH, via FMN and iron-sulfur (Fe-S) centers, to quinones in the respiratory chain. The immediate electron acceptor for the enzyme in this species is believed to be ubiquinone. Couples the redox reaction to proton translocation (for every two electrons transferred, four hydrogen ions are translocated across the cytoplasmic membrane), and thus conserves the redox energy in a proton gradient. This subunit may bind ubiquinone. This is NADH-quinone oxidoreductase subunit H 2 from Rhodopseudomonas palustris (strain ATCC BAA-98 / CGA009).